The following is a 370-amino-acid chain: Proto-oncogene Wnt-1 (370 aa).

The N-terminal stretch at 1–27 is a signal peptide; it reads MGLWALLPSWVSTTLLLALTALPAALA. Asn29 carries an N-linked (GlcNAc...) asparagine glycan. Intrachain disulfides connect Cys93–Cys104, Cys143–Cys151, Cys153–Cys170, Cys218–Cys232, Cys220–Cys227, Cys299–Cys330, Cys315–Cys325, Cys329–Cys369, Cys345–Cys360, Cys347–Cys357, and Cys352–Cys353. A lipid anchor (O-palmitoleoyl serine; by PORCN) is attached at Ser224. 2 N-linked (GlcNAc...) asparagine glycosylation sites follow: Asn316 and Asn346. Asn359 is a glycosylation site (N-linked (GlcNAc...) asparagine).

The protein belongs to the Wnt family. Forms a soluble 1:1 complex with AFM; this prevents oligomerization and is required for prolonged biological activity. The complex with AFM may represent the physiological form in body fluids. Interacts with PORCN. Interacts with RSPO1, RSPO2 and RSPO3. Interacts with WLS. Post-translationally, palmitoleoylation is required for efficient binding to frizzled receptors. Palmitoleoylation is necessary for proper trafficking to cell surface. Depalmitoleoylated by NOTUM, leading to inhibit Wnt signaling pathway. In terms of tissue distribution, testis and mid-gestational embryos. In the testis, detected only in postmeiotic germ cells undergoing differentiation from round spermatids into mature spermatozoa. In the embryos, expression is restricted to the developing CNS in regions of the neural tube other than the telencephalon. Expressed in osteoblast; expression levels increase with advancing osteoblast differentiation. Expressed in the brain, femur, spleen, and hematopoietic bone marrow.

It localises to the secreted. The protein resides in the extracellular space. Its subcellular location is the extracellular matrix. Ligand for members of the frizzled family of seven transmembrane receptors. Acts in the canonical Wnt signaling pathway by promoting beta-catenin-dependent transcriptional activation. In some developmental processes, is also a ligand for the coreceptor RYK, thus triggering Wnt signaling. Plays an essential role in the development of the embryonic brain and central nervous system (CNS). Has a role in osteoblast function, bone development and bone homeostasis. This chain is Proto-oncogene Wnt-1 (Wnt1), found in Mus musculus (Mouse).